Reading from the N-terminus, the 358-residue chain is tRNA-specific 2-thiouridylase MnmA (358 aa).

Residues 7-14 (AMSGGVDS) and L33 each bind ATP. C101 functions as the Nucleophile in the catalytic mechanism. C101 and C197 are oxidised to a cystine. Position 125 (G125) interacts with ATP. Residues 147 to 149 (KDQ) form an interaction with tRNA region. C197 functions as the Cysteine persulfide intermediate in the catalytic mechanism.

The protein belongs to the MnmA/TRMU family.

The protein resides in the cytoplasm. It catalyses the reaction S-sulfanyl-L-cysteinyl-[protein] + uridine(34) in tRNA + AH2 + ATP = 2-thiouridine(34) in tRNA + L-cysteinyl-[protein] + A + AMP + diphosphate + H(+). Functionally, catalyzes the 2-thiolation of uridine at the wobble position (U34) of tRNA, leading to the formation of s(2)U34. In Rickettsia prowazekii (strain Madrid E), this protein is tRNA-specific 2-thiouridylase MnmA.